The primary structure comprises 469 residues: Probable ribonuclease FAU-1 (469 aa).

The protein belongs to the FAU-1 family.

Probable RNase involved in rRNA stability through maturation and/or degradation of precursor rRNAs. Binds to RNA in loop regions with AU-rich sequences. This Pyrococcus horikoshii (strain ATCC 700860 / DSM 12428 / JCM 9974 / NBRC 100139 / OT-3) protein is Probable ribonuclease FAU-1.